The primary structure comprises 37 residues: Cytochrome b6-f complex subunit 5 (37 aa).

The helical transmembrane segment at 5–25 (LLSGIVLGLVPITLAGLFVTA) threads the bilayer.

The protein belongs to the PetG family. The 4 large subunits of the cytochrome b6-f complex are cytochrome b6, subunit IV (17 kDa polypeptide, PetD), cytochrome f and the Rieske protein, while the 4 small subunits are PetG, PetL, PetM and PetN. The complex functions as a dimer.

Its subcellular location is the plastid. The protein localises to the chloroplast thylakoid membrane. Component of the cytochrome b6-f complex, which mediates electron transfer between photosystem II (PSII) and photosystem I (PSI), cyclic electron flow around PSI, and state transitions. PetG is required for either the stability or assembly of the cytochrome b6-f complex. This is Cytochrome b6-f complex subunit 5 from Gnetum parvifolium (Small-leaved jointfir).